We begin with the raw amino-acid sequence, 267 residues long: 2-keto-3-deoxy-L-rhamnonate aldolase (267 aa).

His49 serves as the catalytic Proton acceptor. Gln151 serves as a coordination point for substrate. A Mg(2+)-binding site is contributed by Glu153. Residues Ala178 and Asp179 each contribute to the substrate site. Asp179 is a binding site for Mg(2+).

This sequence belongs to the HpcH/HpaI aldolase family. KDR aldolase subfamily. In terms of assembly, homohexamer. It depends on Mg(2+) as a cofactor.

It carries out the reaction 2-dehydro-3-deoxy-L-rhamnonate = (S)-lactaldehyde + pyruvate. Functionally, catalyzes the reversible retro-aldol cleavage of 2-keto-3-deoxy-L-rhamnonate (KDR) to pyruvate and lactaldehyde. The protein is 2-keto-3-deoxy-L-rhamnonate aldolase of Escherichia coli O17:K52:H18 (strain UMN026 / ExPEC).